Consider the following 349-residue polypeptide: Thioredoxin-related transmembrane protein 4 (349 aa).

The first 23 residues, M1–A23, serve as a signal peptide directing secretion. Positions A30–E137 constitute a Thioredoxin domain. Active-site nucleophile residues include C64 and C67. C64 and C67 form a disulfide bridge. A helical transmembrane segment spans residues V190–I210. A compositionally biased stretch (basic and acidic residues) spans R225 to Q240. Positions R225–L349 are disordered. Composition is skewed to acidic residues over residues Q242 to N284 and V312 to I321. A phosphoserine mark is found at S251 and S259. Positions D335–L349 are enriched in basic and acidic residues.

Its subcellular location is the nucleus inner membrane. The protein resides in the endoplasmic reticulum membrane. The sequence is that of Thioredoxin-related transmembrane protein 4 (TMX4) from Homo sapiens (Human).